The primary structure comprises 205 residues: Thiamine-phosphate synthase (205 aa).

Residues 34 to 38 and asparagine 66 contribute to the 4-amino-2-methyl-5-(diphosphooxymethyl)pyrimidine site; that span reads QLRCK. Mg(2+) contacts are provided by aspartate 67 and aspartate 86. Residue serine 105 participates in 4-amino-2-methyl-5-(diphosphooxymethyl)pyrimidine binding. Residue 131–133 coordinates 2-[(2R,5Z)-2-carboxy-4-methylthiazol-5(2H)-ylidene]ethyl phosphate; that stretch reads TTT. Lysine 134 contacts 4-amino-2-methyl-5-(diphosphooxymethyl)pyrimidine. Glycine 163 contributes to the 2-[(2R,5Z)-2-carboxy-4-methylthiazol-5(2H)-ylidene]ethyl phosphate binding site.

It belongs to the thiamine-phosphate synthase family. Mg(2+) is required as a cofactor.

The enzyme catalyses 2-[(2R,5Z)-2-carboxy-4-methylthiazol-5(2H)-ylidene]ethyl phosphate + 4-amino-2-methyl-5-(diphosphooxymethyl)pyrimidine + 2 H(+) = thiamine phosphate + CO2 + diphosphate. It carries out the reaction 2-(2-carboxy-4-methylthiazol-5-yl)ethyl phosphate + 4-amino-2-methyl-5-(diphosphooxymethyl)pyrimidine + 2 H(+) = thiamine phosphate + CO2 + diphosphate. The catalysed reaction is 4-methyl-5-(2-phosphooxyethyl)-thiazole + 4-amino-2-methyl-5-(diphosphooxymethyl)pyrimidine + H(+) = thiamine phosphate + diphosphate. Its pathway is cofactor biosynthesis; thiamine diphosphate biosynthesis; thiamine phosphate from 4-amino-2-methyl-5-diphosphomethylpyrimidine and 4-methyl-5-(2-phosphoethyl)-thiazole: step 1/1. Condenses 4-methyl-5-(beta-hydroxyethyl)thiazole monophosphate (THZ-P) and 2-methyl-4-amino-5-hydroxymethyl pyrimidine pyrophosphate (HMP-PP) to form thiamine monophosphate (TMP). The sequence is that of Thiamine-phosphate synthase from Neisseria meningitidis serogroup B (strain ATCC BAA-335 / MC58).